Here is a 115-residue protein sequence, read N- to C-terminus: Holo-[acyl-carrier-protein] synthase (115 aa).

Asp-8 and Glu-56 together coordinate Mg(2+).

The protein belongs to the P-Pant transferase superfamily. AcpS family. Mg(2+) is required as a cofactor.

It is found in the cytoplasm. It catalyses the reaction apo-[ACP] + CoA = holo-[ACP] + adenosine 3',5'-bisphosphate + H(+). Functionally, transfers the 4'-phosphopantetheine moiety from coenzyme A to a Ser of acyl-carrier-protein. The polypeptide is Holo-[acyl-carrier-protein] synthase (Ureaplasma parvum serovar 3 (strain ATCC 27815 / 27 / NCTC 11736)).